The sequence spans 76 residues: UPF0248 protein MmarC6_0667 (76 aa).

The protein belongs to the UPF0248 family.

The chain is UPF0248 protein MmarC6_0667 from Methanococcus maripaludis (strain C6 / ATCC BAA-1332).